The sequence spans 943 residues: Receptor-like kinase TMK3 (943 aa).

The signal sequence occupies residues 1 to 24 (MSNSHLGTLCFIISLLGLANFSLS). Residues 25-482 (QTGLDDSTMQ…ETSKKSSNVK (458 aa)) are Extracellular-facing. Residue Asn41 is glycosylated (N-linked (GlcNAc...) asparagine). An intrachain disulfide couples Cys54 to Cys61. LRR repeat units lie at residues 64 to 88 (SNRV…LQSL), 89 to 111 (SELV…LSGL), 112 to 134 (SRLQ…LFSG), 136 to 160 (SSLQ…VKEA), 162 to 183 (SLQN…FFGS), 186 to 210 (LPSL…FAGT), 212 to 232 (IQSL…LGNM), 233 to 254 (TSLV…DLSG), 255 to 279 (LVSL…LVSL), and 281 to 301 (SLTT…LFGK). 2 N-linked (GlcNAc...) asparagine glycosylation sites follow: Asn165 and Asn170. Asn223 and Asn231 each carry an N-linked (GlcNAc...) asparagine glycan. Residue Asn286 is glycosylated (N-linked (GlcNAc...) asparagine). 2 disulfide bridges follow: Cys315–Cys323 and Cys353–Cys361. 3 LRR repeats span residues 363–386 (GGNI…SLAK), 387–410 (LTSL…ELTT), and 411–438 (LSKL…VTLV). N-linked (GlcNAc...) asparagine glycosylation is present at Asn365. The segment at 441-476 (GNANMGKNGPNKTSDAPGASPGSKPSGGSDGSETSK) is disordered. Residue Asn451 is glycosylated (N-linked (GlcNAc...) asparagine). The span at 454–467 (SDAPGASPGSKPSG) shows a compositional bias: low complexity. A helical transmembrane segment spans residues 483 to 503 (IIVPVVGGVVGALCLVGLGVC). Residues 504–943 (LYAKKRKRPA…ADSFTSVDGR (440 aa)) are Cytoplasmic-facing. The interval 514-534 (RVQSPSSNMVIHPHHSGDNDD) is disordered. In terms of domain architecture, Protein kinase spans 585–866 (FSEENILGRG…AHIVNVLSSL (282 aa)). ATP contacts are provided by residues 591 to 599 (LGRGGFGTV) and Lys613. Residue Asp714 is the Proton acceptor of the active site. The interval 904-943 (QTADDSGSSSSAYGSKDNTQTSIPTRPSGFADSFTSVDGR) is disordered. Residues 906-918 (ADDSGSSSSAYGS) show a composition bias toward low complexity. Over residues 919 to 928 (KDNTQTSIPT) the composition is skewed to polar residues.

Belongs to the protein kinase superfamily. Ser/Thr protein kinase family. In terms of tissue distribution, expressed in roots, leaves, stems, siliques and flowers.

The protein localises to the membrane. The catalysed reaction is L-seryl-[protein] + ATP = O-phospho-L-seryl-[protein] + ADP + H(+). It carries out the reaction L-threonyl-[protein] + ATP = O-phospho-L-threonyl-[protein] + ADP + H(+). Functionally, involved in auxin signal transduction and cell expansion and proliferation regulation. The protein is Receptor-like kinase TMK3 of Arabidopsis thaliana (Mouse-ear cress).